The primary structure comprises 599 residues: Beta-(1--&gt;2)glucan export ATP-binding/permease protein NdvA (599 aa).

One can recognise an ABC transmembrane type-1 domain in the interval 21–301 (TITMCVASVL…ISAFINQTVT (281 aa)). 5 consecutive transmembrane segments (helical) span residues 22 to 42 (ITMCVASVLVALVTLAEPVLF), 55 to 75 (IFSPLLMWAALGGFNIMAAVF), 156 to 176 (MRMSLVLIVLGVIYVMIGQLV), 248 to 268 (MASTFSMVVVLVLGAYFVTKG), and 276 to 296 (IAFIGFAQLMIGRLDQISAFI). Residues 335 to 569 (IVFDNVTYEF…GGRFSDLLRA (235 aa)) form the ABC transporter domain. 368–375 (GPTGAGKT) contributes to the ATP binding site.

It belongs to the ABC transporter superfamily. Beta-(1--&gt;2)glucan exporter (TC 3.A.1.108.1) family. In terms of assembly, homodimer.

Its subcellular location is the cell inner membrane. The enzyme catalyses [(1-&gt;2)-beta-D-glucosyl](n)(in) + ATP + H2O = [(1-&gt;2)-beta-D-glucosyl](n)(out) + ADP + phosphate + H(+). Involved in beta-(1--&gt;2)glucan export. Transmembrane domains (TMD) form a pore in the inner membrane and the ATP-binding domain (NBD) is responsible for energy generation. In Brucella melitensis biotype 1 (strain ATCC 23456 / CCUG 17765 / NCTC 10094 / 16M), this protein is Beta-(1--&gt;2)glucan export ATP-binding/permease protein NdvA.